A 230-amino-acid polypeptide reads, in one-letter code: Secretory carrier-associated membrane protein 4 (230 aa).

The Cytoplasmic segment spans residues 1–39 (MAGKENNFPPLPHFLPLKPCFYQDFSDEIPVEHQVLVKR). 4 helical membrane-spanning segments follow: residues 40-60 (IYRLWMFYCTTLGVNLVACLA), 61-81 (WWIAGGAGANFGLAMLWLVLF), 106-126 (MAFFFIFGAQFVLTVIQAIGF), and 149-169 (VVMLIPAIMFSLSAVVMAITI). Residues 170–230 (VKVHRIYRGA…SYSTSGSQWP (61 aa)) lie on the Cytoplasmic side of the membrane. Thr-194 is modified (phosphothreonine). The disordered stretch occupies residues 197-230 (NPPSREAQFNSFSGNSLPEYPTVPSYSTSGSQWP). Composition is skewed to polar residues over residues 203 to 212 (AQFNSFSGNS) and 220 to 230 (PSYSTSGSQWP).

The protein belongs to the SCAMP family.

It localises to the membrane. Probably involved in membrane protein trafficking. The sequence is that of Secretory carrier-associated membrane protein 4 (Scamp4) from Rattus norvegicus (Rat).